Consider the following 980-residue polypeptide: Alanine--tRNA ligase, mitochondrial (980 aa).

Residues 1–23 constitute a mitochondrion transit peptide; the sequence is MAVALAAAAGKLRRAIGRSCPWQ. ATP-binding positions include R105, H123, W205, and 235-237; that span reads LWN. L-alanine-binding residues include N237 and D260. Residue G264 coordinates ATP. 4 residues coordinate Zn(2+): H627, H631, C744, and H748.

Belongs to the class-II aminoacyl-tRNA synthetase family. Monomer. The cofactor is Zn(2+).

The protein localises to the mitochondrion. The catalysed reaction is tRNA(Ala) + L-alanine + ATP = L-alanyl-tRNA(Ala) + AMP + diphosphate. It carries out the reaction (S)-lactate + ATP + H(+) = (S)-lactoyl-AMP + diphosphate. It catalyses the reaction (S)-lactoyl-AMP + L-lysyl-[protein] = N(6)-[(S)-lactoyl]-L-lysyl-[protein] + AMP + 2 H(+). Its function is as follows. Catalyzes the attachment of alanine to tRNA(Ala) in a two-step reaction: alanine is first activated by ATP to form Ala-AMP and then transferred to the acceptor end of tRNA(Ala). Also edits incorrectly charged tRNA(Ala) via its editing domain. In presence of high levels of lactate, also acts as a protein lactyltransferase that mediates lactylation of lysine residues in target proteins, such as CGAS. Acts as an inhibitor of cGAS/STING signaling by catalyzing lactylation of CGAS, preventing the formation of liquid-like droplets in which CGAS is activated. This chain is Alanine--tRNA ligase, mitochondrial (Aars2), found in Mus musculus (Mouse).